A 435-amino-acid polypeptide reads, in one-letter code: Zinc metalloproteinase/disintegrin (435 aa).

The propeptide occupies 1-26; that stretch reads KMCGVTQNWESYESTKKASQLNLTPE. Gln-27 bears the Pyrrolidone carboxylic acid mark. The Peptidase M12B domain maps to 33 to 227; the sequence is RYIKLGIFVD…HNFQCILNAP (195 aa). N-linked (GlcNAc...) asparagine glycosylation occurs at Asn-115. Intrachain disulfides connect Cys-144–Cys-222, Cys-184–Cys-206, and Cys-186–Cys-189. His-169 is a binding site for Zn(2+). Glu-170 is an active-site residue. Residues His-173 and His-179 each coordinate Zn(2+). Positions 228 to 243 are excised as a propeptide; sequence LRTDTVSTPVSGNELL. Residues 235–318 enclose the Disintegrin domain; it reads TPVSGNELLE…DCPTDDFHRN (84 aa). Val-237, Asn-240, Leu-242, Glu-244, Glu-247, and Asp-250 together coordinate Ca(2+). 6 disulfide bridges follow: Cys-249–Cys-264, Cys-251–Cys-259, Cys-258–Cys-281, Cys-272–Cys-278, Cys-277–Cys-303, and Cys-290–Cys-310. The short motif at 296–298 is the D/ECD-tripeptide element; the sequence is ECD.

The protein belongs to the venom metalloproteinase (M12B) family. P-III subfamily. P-IIIb sub-subfamily. As to quaternary structure, monomer. The cofactor is Zn(2+). The N-terminus of the metalloproteinase is blocked. In terms of tissue distribution, expressed by the venom gland.

It is found in the secreted. Inhibited by EDTA. Cleaves the alpha chain of fibrinogen (FGA) preferentially and cleaves the beta chain (FGB) either on longer incubation or at high concentrations. Induces apoptosis of endothelial cells (prior to cell detachment). Functionally, disintegrin: inhibits platelet aggregation induced by ADP, thrombin, platelet-activating factor and collagen. Acts by inhibiting fibrinogen interaction with platelet receptors GPIIb/GPIIIa (ITGA2B/ITGB3). This chain is Zinc metalloproteinase/disintegrin, found in Craspedocephalus gramineus (Bamboo pit viper).